A 361-amino-acid polypeptide reads, in one-letter code: 3-dehydroquinate synthase (361 aa).

NAD(+) is bound by residues 71–76, 105–109, 129–130, Lys142, Lys151, and 169–172; these read DGEQFK, GVIGD, TT, and CLQT. Zn(2+)-binding residues include Glu184, His247, and His264.

The protein belongs to the sugar phosphate cyclases superfamily. Dehydroquinate synthase family. Co(2+) is required as a cofactor. It depends on Zn(2+) as a cofactor. NAD(+) serves as cofactor.

It is found in the cytoplasm. It catalyses the reaction 7-phospho-2-dehydro-3-deoxy-D-arabino-heptonate = 3-dehydroquinate + phosphate. Its pathway is metabolic intermediate biosynthesis; chorismate biosynthesis; chorismate from D-erythrose 4-phosphate and phosphoenolpyruvate: step 2/7. Its function is as follows. Catalyzes the conversion of 3-deoxy-D-arabino-heptulosonate 7-phosphate (DAHP) to dehydroquinate (DHQ). The protein is 3-dehydroquinate synthase of Edwardsiella ictaluri (strain 93-146).